A 63-amino-acid chain; its full sequence is Large ribosomal subunit protein uL30 (63 aa).

The protein belongs to the universal ribosomal protein uL30 family. Part of the 50S ribosomal subunit.

The polypeptide is Large ribosomal subunit protein uL30 (Methylobacterium sp. (strain 4-46)).